The sequence spans 272 residues: Thiazole synthase (272 aa).

The active-site Schiff-base intermediate with DXP is the Lys-111. 1-deoxy-D-xylulose 5-phosphate-binding positions include Gly-172, 198-199, and 220-221; these read AG and NS. The disordered stretch occupies residues 249–272; that stretch reads SGRLPRRDQASASSPTTGLVQSPQ. Polar residues predominate over residues 258-272; the sequence is ASASSPTTGLVQSPQ.

Belongs to the ThiG family. As to quaternary structure, homotetramer. Forms heterodimers with either ThiH or ThiS.

It localises to the cytoplasm. It catalyses the reaction [ThiS sulfur-carrier protein]-C-terminal-Gly-aminoethanethioate + 2-iminoacetate + 1-deoxy-D-xylulose 5-phosphate = [ThiS sulfur-carrier protein]-C-terminal Gly-Gly + 2-[(2R,5Z)-2-carboxy-4-methylthiazol-5(2H)-ylidene]ethyl phosphate + 2 H2O + H(+). It functions in the pathway cofactor biosynthesis; thiamine diphosphate biosynthesis. Its function is as follows. Catalyzes the rearrangement of 1-deoxy-D-xylulose 5-phosphate (DXP) to produce the thiazole phosphate moiety of thiamine. Sulfur is provided by the thiocarboxylate moiety of the carrier protein ThiS. In vitro, sulfur can be provided by H(2)S. This is Thiazole synthase from Synechococcus sp. (strain CC9605).